We begin with the raw amino-acid sequence, 199 residues long: NAD(P)H dehydrogenase (quinone) (199 aa).

Residues 4–190 (ILVLYYSMYG…KIARYQGEHV (187 aa)) form the Flavodoxin-like domain. FMN contacts are provided by residues 10-15 (SMYGHI) and 79-81 (TRF). Tyr12 serves as a coordination point for NAD(+). Residue Trp99 participates in substrate binding. FMN is bound at residue His134.

The protein belongs to the WrbA family. Requires FMN as cofactor.

The catalysed reaction is a quinone + NADH + H(+) = a quinol + NAD(+). It carries out the reaction a quinone + NADPH + H(+) = a quinol + NADP(+). The polypeptide is NAD(P)H dehydrogenase (quinone) (Photorhabdus laumondii subsp. laumondii (strain DSM 15139 / CIP 105565 / TT01) (Photorhabdus luminescens subsp. laumondii)).